We begin with the raw amino-acid sequence, 66 residues long: uncharacterized protein (66 aa).

The chain crosses the membrane as a helical span at residues 11 to 31; that stretch reads PFPLLGVWIIVIIIVAVIGLL.

The protein resides in the membrane. This is an uncharacterized protein from Chenopodium amaranticolor (Quinoa).